The following is a 323-amino-acid chain: Phosphatidylethanolamine:ceramide ethanolaminephosphotransferase (323 aa).

At 1–26 the chain is on the cytoplasmic side; sequence MAVPPVEMYSGSFWNRMRKPLPLRTQ. Residues 27–47 traverse the membrane as a helical segment; sequence VIRFTVVFVIVSFILVVALQI. Over 48-74 the chain is Extracellular; sequence THERMPDPKVTKPLPDLGFELLTKVPG. The helical transmembrane segment at 75 to 95 threads the bilayer; that stretch reads MYVLADCCIGFLNILSVFTAF. Topologically, residues 96 to 147 are cytoplasmic; that stretch reads KLYLLHRHCVGSGEPELPCNIPGVSRFFLSVWLCKENCRIELRNIHTIAWIR. Residues 148–168 form a helical membrane-spanning segment; it reads FITSYALLLLSRSIIMVVTSL. Residues 169–187 lie on the Extracellular side of the membrane; sequence PNPDDLCQNPPKIENRVKD. A helical membrane pass occupies residues 188-208; sequence ILLTVLTAGAGSIHCGDLMYS. The Cytoplasmic segment spans residues 209 to 233; it reads GHTVILTLHLMFHWIYGAMVHWSFR. A helical membrane pass occupies residues 234–254; that stretch reads PVVTVVAIFGYYCIVASRFHY. The Extracellular portion of the chain corresponds to 255–257; the sequence is TDD. Residues 258–278 form a helical membrane-spanning segment; the sequence is VLVAIYLTIATFIAVGHNADG. Topologically, residues 279-323 are cytoplasmic; that stretch reads APWQLQLFIRWWPCCGANSREVAEDGVPVAIVIKNEEMMNFEGKS.

The protein belongs to the sphingomyelin synthase family.

It is found in the membrane. The enzyme catalyses an N-acylsphing-4-enine + a 1,2-diacyl-sn-glycero-3-phosphoethanolamine = an N-acylsphing-4-enine 1-phosphoethanolamine + a 1,2-diacyl-sn-glycerol. It carries out the reaction an N-acylsphinganine + a 1,2-diacyl-sn-glycero-3-phosphoethanolamine = an N-acylsphinganine-1-phosphoethanolamine + a 1,2-diacyl-sn-glycerol. Predominantly synthesizes ethanolamine-phosphorylceramide (EPC), with minimal sphingomyelin (SM)/inositol phosphorylceramide (IPC) synthase activity. Specificity is likely to be defined by residues in the lumenal catalytic domain that interact with the polar head groups of the phospholipid donors. EPC is synthesized by both stages of the parasite life cycle, bloodstream forms (BSF) and procyclic forms (PCF), by transferring the phosphoethanolamine from a 1,2-diacyl-sn-glycero-3-phosphoethanolamine to an N-acylsphing-4-enine (ceramide) or an N-acylsphinganine (dihydroceramide). Similarly, SM is synthesized by transferring the phosphocholine from a 1,2-diacyl-sn-glycero-3-phosphocholine to ceramide or dihydroceramide by BSF and PCF, while IPC is confined to PCF. The ceramide/dihydroceramide ratios are skewed towards dihydroceramide in PCF parasites and ceramide in BSF parasites, this is likely due to differential expression and/or regulation of dihydroceramide desaturase, the enzyme responsible for converting dihydroceramide to ceramide. The chain is Phosphatidylethanolamine:ceramide ethanolaminephosphotransferase from Trypanosoma brucei brucei.